Consider the following 217-residue polypeptide: MQFSSSARTVDENFDYLFKIILIGDSNVGKTCVVQHFKSGVYMEAQQNTIGVDFTVRALEIDGKKVKMQVWDTAGQERFRTITQSYYRSAHAAIIAYDLTRRSTFESVPHWIHEIEKYGAANLVIMLIGNKCDLWEKRHVLFEDACILAEKYGLLAVLETSAKESKNIDEVFVLMARELMARHSLPLYGEGAPGSLPLESTPVLMAPAPREKNQCTC.

Positions 26, 28, 29, 30, 31, 32, 42, 44, and 49 each coordinate GTP. T31 provides a ligand contact to Mg(2+). Residues 39–54 carry the Switch 1 motif; sequence SGVYMEAQQNTIGVDF. T49 and D72 together coordinate Mg(2+). The short motif at 74–89 is the Switch 2 element; the sequence is AGQERFRTITQSYYRS. The GTP site is built by G75, N130, K131, D133, S161, A162, and K163. 2 S-geranylgeranyl cysteine lipidation sites follow: C215 and C217. Position 217 is a cysteine methyl ester (C217).

The protein belongs to the small GTPase superfamily. Rab family. Mg(2+) serves as cofactor.

The protein resides in the cell membrane. It catalyses the reaction GTP + H2O = GDP + phosphate + H(+). With respect to regulation, regulated by guanine nucleotide exchange factors (GEFs) which promote the exchange of bound GDP for free GTP. Regulated by GTPase activating proteins (GAPs) which increase the GTP hydrolysis activity. Inhibited by GDP dissociation inhibitors (GDIs). Functionally, the small GTPases Rab are key regulators of intracellular membrane trafficking, from the formation of transport vesicles to their fusion with membranes. Rabs cycle between an inactive GDP-bound form and an active GTP-bound form that is able to recruit to membranes different set of downstream effectors directly responsible for vesicle formation, movement, tethering and fusion. This is Ras-related protein Rab-19 (RAB19) from Bos taurus (Bovine).